A 1153-amino-acid polypeptide reads, in one-letter code: Tyrosine-protein kinase JAK1 (1153 aa).

The region spanning 32–416 (KGLEIHFYLA…GYFRLTVDAH (385 aa)) is the FERM domain. Residues 435–540 (GCHGPICTEY…NLRFQLRRCC (106 aa)) form the SH2; atypical domain. Protein kinase domains lie at 580–846 (IVQG…DIVM) and 872–1150 (LKKI…QQML). ATP-binding positions include 878–886 (LGEGHFGKV) and Lys905. Asp1000 acts as the Proton acceptor in catalysis. A phosphotyrosine; by autocatalysis mark is found at Tyr1031 and Tyr1032.

It belongs to the protein kinase superfamily. Tyr protein kinase family. JAK subfamily. The cofactor is Mg(2+).

It is found in the endomembrane system. It carries out the reaction L-tyrosyl-[protein] + ATP = O-phospho-L-tyrosyl-[protein] + ADP + H(+). In terms of biological role, tyrosine kinase of the non-receptor type, involved in the IFN-alpha/beta/gamma signal pathway. Appears to be required in early development for specific cell migrations (epiboly), expression of homeobox protein goosecoid and formation of anterior structures. This is Tyrosine-protein kinase JAK1 (jak1) from Danio rerio (Zebrafish).